The sequence spans 814 residues: MKVRKYITLCFWWAFSTSALVSSQQIPLKDHTSRQYFAVESNETLSRLEEMHPNWKYEHDVRGLPNHYVFSKELLKLGKRSSLEELQGDNNDHILSVHDLFPRNDLFKRLPVPAPPMDSSLLPVKEAEDKLSINDPLFERQWHLVNPSFPGSDINVLDLWYNNITGAGVVAAIVDDGLDYENEDLKDNFCAEGSWDFNDNTNLPKPRLSDDYHGTRCAGEIAAKKGNNFCGVGVGYNAKISGIRILSGDITTEDEAASLIYGLDVNDIYSCSWGPADDGRHLQGPSDLVKKALVKGVTEGRDSKGAIYVFASGNGGTRGDNCNYDGYTNSIYSITIGAIDHKDLHPPYSEGCSAVMAVTYSSGSGEYIHSSDINGRCSNSHGGTSAAAPLAAGVYTLLLEANPNLTWRDVQYLSILSAVGLEKNADGDWRDSAMGKKYSHRYGFGKIDAHKLIEMSKTWENVNAQTWFYLPTLYVSQSTNSTEETLESVITISEKSLQDANFKRIEHVTVTVDIDTEIRGTTTVDLISPAGIISNLGVVRPRDVSSEGFKDWTFMSVAHWGENGVGDWKIKVKTTENGHRIDFHSWRLKLFGESIDSSKTETFVFGNDKEEVEPAATESTVSQYSASSTSISISATSTSSISIGVETSAIPQTTTASTDPDSDPNTPKKLSSPRQAMHYFLTIFLIGATFLVLYFMFFMKSRRRIRRSRAETYEFDIIDTDSEYDSTLDNGTSGITEPEEVEDFDFDLSDEDHLASLSSSENGDAEHTIDSVLTNENPFSDPIKQKFPNDANAESASNKLQELQPDVPPSSGRS.

A signal peptide spans 1 to 19 (MKVRKYITLCFWWAFSTSA). Residues 20 to 109 (LVSSQQIPLK…LFPRNDLFKR (90 aa)) constitute a propeptide that is removed on maturation. N-linked (GlcNAc...) asparagine glycosylation occurs at Asn42. A propeptide spans 110–113 (LPVP) (removed by dipeptidylpeptidase STE13). At 114 to 678 (APPMDSSLLP…KLSSPRQAMH (565 aa)) the chain is on the lumenal side. Asp135 lines the Ca(2+) pocket. Residues 141-453 (QWHLVNPSFP…FGKIDAHKLI (313 aa)) enclose the Peptidase S8 domain. An N-linked (GlcNAc...) asparagine glycan is attached at Asn163. Asp175 (charge relay system) is an active-site residue. A Ca(2+)-binding site is contributed by Asp184. His213 (charge relay system) is an active-site residue. Residues Asn227, Asp277, Asp320, and Glu350 each coordinate Ca(2+). 2 cysteine pairs are disulfide-bonded: Cys230–Cys377 and Cys322–Cys352. The Charge relay system role is filled by Ser385. Asn404 and Asn480 each carry an N-linked (GlcNAc...) asparagine glycan. The 135-residue stretch at 462–596 (VNAQTWFYLP…RLKLFGESID (135 aa)) folds into the P/Homo B domain. Residues 651-671 (PQTTTASTDPDSDPNTPKKLS) form a disordered region. The span at 653 to 667 (TTTASTDPDSDPNTP) shows a compositional bias: low complexity. A helical transmembrane segment spans residues 679–699 (YFLTIFLIGATFLVLYFMFFM). The Cytoplasmic portion of the chain corresponds to 700–814 (KSRRRIRRSR…PDVPPSSGRS (115 aa)). Residues 756-814 (SLSSSENGDAEHTIDSVLTNENPFSDPIKQKFPNDANAESASNKLQELQPDVPPSSGRS) form a disordered region. The span at 792–801 (NAESASNKLQ) shows a compositional bias: polar residues.

It belongs to the peptidase S8 family. Furin subfamily. Requires Ca(2+) as cofactor. Post-translationally, O-glycosylated.

The protein resides in the golgi apparatus. It is found in the trans-Golgi network membrane. The catalysed reaction is Cleavage of -Lys-Arg-|-Xaa- and -Arg-Arg-|-Xaa- bonds to process yeast alpha-factor pheromone and killer toxin precursors.. Functionally, processing of precursors of alpha-factors and killer toxin. This Saccharomyces cerevisiae (strain ATCC 204508 / S288c) (Baker's yeast) protein is Kexin (KEX2).